We begin with the raw amino-acid sequence, 154 residues long: 6,7-dimethyl-8-ribityllumazine synthase (154 aa).

5-amino-6-(D-ribitylamino)uracil contacts are provided by residues Phe-22, 56–58, and 80–82; these read AFE and AVI. 85 to 86 is a (2S)-2-hydroxy-3-oxobutyl phosphate binding site; sequence AT. The active-site Proton donor is His-88. Residue Phe-113 coordinates 5-amino-6-(D-ribitylamino)uracil. Arg-127 contributes to the (2S)-2-hydroxy-3-oxobutyl phosphate binding site.

The protein belongs to the DMRL synthase family. As to quaternary structure, forms an icosahedral capsid composed of 60 subunits, arranged as a dodecamer of pentamers.

The catalysed reaction is (2S)-2-hydroxy-3-oxobutyl phosphate + 5-amino-6-(D-ribitylamino)uracil = 6,7-dimethyl-8-(1-D-ribityl)lumazine + phosphate + 2 H2O + H(+). Its pathway is cofactor biosynthesis; riboflavin biosynthesis; riboflavin from 2-hydroxy-3-oxobutyl phosphate and 5-amino-6-(D-ribitylamino)uracil: step 1/2. In terms of biological role, catalyzes the formation of 6,7-dimethyl-8-ribityllumazine by condensation of 5-amino-6-(D-ribitylamino)uracil with 3,4-dihydroxy-2-butanone 4-phosphate. This is the penultimate step in the biosynthesis of riboflavin. The sequence is that of 6,7-dimethyl-8-ribityllumazine synthase from Geobacillus kaustophilus (strain HTA426).